Consider the following 120-residue polypeptide: NAD(P)H-quinone oxidoreductase subunit 3, chloroplastic (120 aa).

3 consecutive transmembrane segments (helical) span residues Ile-9–Gly-29, Met-64–Met-84, and Val-88–Leu-108.

Belongs to the complex I subunit 3 family. As to quaternary structure, NDH is composed of at least 16 different subunits, 5 of which are encoded in the nucleus.

It localises to the plastid. The protein resides in the chloroplast thylakoid membrane. It catalyses the reaction a plastoquinone + NADH + (n+1) H(+)(in) = a plastoquinol + NAD(+) + n H(+)(out). The enzyme catalyses a plastoquinone + NADPH + (n+1) H(+)(in) = a plastoquinol + NADP(+) + n H(+)(out). NDH shuttles electrons from NAD(P)H:plastoquinone, via FMN and iron-sulfur (Fe-S) centers, to quinones in the photosynthetic chain and possibly in a chloroplast respiratory chain. The immediate electron acceptor for the enzyme in this species is believed to be plastoquinone. Couples the redox reaction to proton translocation, and thus conserves the redox energy in a proton gradient. This is NAD(P)H-quinone oxidoreductase subunit 3, chloroplastic from Guizotia abyssinica (Niger).